The following is a 227-amino-acid chain: Cytidylate kinase (227 aa).

10–18 (GPASSGKST) provides a ligand contact to ATP.

The protein belongs to the cytidylate kinase family. Type 1 subfamily.

Its subcellular location is the cytoplasm. It catalyses the reaction CMP + ATP = CDP + ADP. It carries out the reaction dCMP + ATP = dCDP + ADP. The polypeptide is Cytidylate kinase (Streptococcus mutans serotype c (strain ATCC 700610 / UA159)).